The chain runs to 199 residues: Superoxide dismutase [Fe] (199 aa).

Residues His-27, His-74, Asp-158, and His-162 each coordinate Fe cation.

The protein belongs to the iron/manganese superoxide dismutase family. As to quaternary structure, homodimer. Requires Fe cation as cofactor.

The catalysed reaction is 2 superoxide + 2 H(+) = H2O2 + O2. Its function is as follows. Destroys superoxide anion radicals which are normally produced within the cells and which are toxic to biological systems. This is Superoxide dismutase [Fe] (SODB) from Babesia bovis.